The primary structure comprises 307 residues: Protoheme IX farnesyltransferase (307 aa).

8 helical membrane passes run 32–52 (MGIV…ALHF), 65–85 (FFTI…NNYI), 108–128 (PGFA…FLLL), 131–151 (PMAV…YSLW), 158–178 (LNTV…WAAI), 186–206 (IAWM…LALA), 251–271 (LGIT…VLGF), and 287–307 (FVYS…VTFF).

The protein belongs to the UbiA prenyltransferase family. Protoheme IX farnesyltransferase subfamily. In terms of assembly, interacts with CtaA.

The protein localises to the cell membrane. It carries out the reaction heme b + (2E,6E)-farnesyl diphosphate + H2O = Fe(II)-heme o + diphosphate. The protein operates within porphyrin-containing compound metabolism; heme O biosynthesis; heme O from protoheme: step 1/1. Its function is as follows. Converts heme B (protoheme IX) to heme O by substitution of the vinyl group on carbon 2 of heme B porphyrin ring with a hydroxyethyl farnesyl side group. This Bacillus cereus (strain G9842) protein is Protoheme IX farnesyltransferase.